Here is a 239-residue protein sequence, read N- to C-terminus: MEIFPAIDLKEGRCVRLYQGEFSKETVMNEDPVAQAIIFEKFGAKTLHIVDLDGAIAGESLNLPIIEKICKAVRIPVQVGGGIRSLVAVEKLFSVGVDKVILGTAALYDKTFLEETVRLYKEKIIVGIDAKNGFVATRGWLDVSEISYIDLAKQMEKIGVQTIVFTDISKDGTLAGPNVEQLELLQKNVATRLIASGGVASIQDVKKLNDMNIYGVIIGKALYEKTIDLEEVLEVTKLC.

The active-site Proton acceptor is D8. The active-site Proton donor is the D129.

The protein belongs to the HisA/HisF family.

It is found in the cytoplasm. The catalysed reaction is 1-(5-phospho-beta-D-ribosyl)-5-[(5-phospho-beta-D-ribosylamino)methylideneamino]imidazole-4-carboxamide = 5-[(5-phospho-1-deoxy-D-ribulos-1-ylimino)methylamino]-1-(5-phospho-beta-D-ribosyl)imidazole-4-carboxamide. The protein operates within amino-acid biosynthesis; L-histidine biosynthesis; L-histidine from 5-phospho-alpha-D-ribose 1-diphosphate: step 4/9. This is 1-(5-phosphoribosyl)-5-[(5-phosphoribosylamino)methylideneamino] imidazole-4-carboxamide isomerase from Bacillus cereus (strain ZK / E33L).